Here is a 280-residue protein sequence, read N- to C-terminus: Bifunctional protein FolD (280 aa).

Residues 166–168 (GRS) and Ser-191 contribute to the NADP(+) site.

Belongs to the tetrahydrofolate dehydrogenase/cyclohydrolase family. As to quaternary structure, homodimer.

It catalyses the reaction (6R)-5,10-methylene-5,6,7,8-tetrahydrofolate + NADP(+) = (6R)-5,10-methenyltetrahydrofolate + NADPH. The catalysed reaction is (6R)-5,10-methenyltetrahydrofolate + H2O = (6R)-10-formyltetrahydrofolate + H(+). The protein operates within one-carbon metabolism; tetrahydrofolate interconversion. Its function is as follows. Catalyzes the oxidation of 5,10-methylenetetrahydrofolate to 5,10-methenyltetrahydrofolate and then the hydrolysis of 5,10-methenyltetrahydrofolate to 10-formyltetrahydrofolate. This Cellvibrio japonicus (strain Ueda107) (Pseudomonas fluorescens subsp. cellulosa) protein is Bifunctional protein FolD.